The following is a 263-amino-acid chain: MTRIDDTFARLSASGKKAFVSYIMAGDPDYATSLEVMRGLPAAGVDIIELGLPFTDPMADGSTIQLAGQRALDGGMTLDKTLQMVRDFRAGDDTTPIVLMGYYNPIYSRGVDRFLTDAREAGIDGLIVVDLPPEEDEELCIPAQAAGLNFIRLATPTTDDARLPAVLSNTSGFLYYVSITGITGAAAPQAADVAPEVARIKSATDIPVIVGFGITTSEAARTIAGVADGCVVGSAIVSRIAEGEPVADVLAFVKSLSDGAHAA.

Catalysis depends on proton acceptor residues Glu-49 and Asp-60.

Belongs to the TrpA family. In terms of assembly, tetramer of two alpha and two beta chains.

The enzyme catalyses (1S,2R)-1-C-(indol-3-yl)glycerol 3-phosphate + L-serine = D-glyceraldehyde 3-phosphate + L-tryptophan + H2O. It functions in the pathway amino-acid biosynthesis; L-tryptophan biosynthesis; L-tryptophan from chorismate: step 5/5. Its function is as follows. The alpha subunit is responsible for the aldol cleavage of indoleglycerol phosphate to indole and glyceraldehyde 3-phosphate. This is Tryptophan synthase alpha chain from Jannaschia sp. (strain CCS1).